The sequence spans 617 residues: MKTFTLPASVLFCFLLLIQGLGAAPPGRPDVFPPPLSSEHNGQVAEDAVSRPKDDGVPEVRAARNPEPQDQGELFQGVDPRALASVLLQALDRPASPPSVPGGSQQGTPEEAAEALLTESVRSQTHSLPAPEIQAPAVAPPRPQTQDRDPEEDDRSEELEALASLLQELRDFSPSNAKRQQETAAAETETRTHTLTRVNLESPGPERVWRASWGEFQARVPERAPLPPPVPSQFQARMSESAPLPETHQFGEGVSSPKTHLGETLTPLSKAYQSLGGPFPKVRRLEGSFLGGSEAGERLLQQGLAQVEAGRRQAEATRQAAAQEERLADLASDLLLQYLLQGGARQRDLGGRELQETQQERENEREEEAEQERRGGGEDDVGEEDEEAAEAEAEAEEAERARQNALLFAEEEDGEAGAEDKRSQEEAPGHRRKDAEGAEEGGEEDDDDEEMDPQTIDSLIELSTKLHLPADDVVSIIEEVEEKRKRKKNAPPEPVPPPRAAPAPTHVRSPQPPPPAPARDELPDWNEVLPPWDREEDEVFPPGPYHPFPNYIRPRTLQPPASSRRRHFHHALPPARHHPDLEAQARRAQEEADAEERRLQEQEELENYIEHVLLHRP.

The first 23 residues, 1 to 23 (MKTFTLPASVLFCFLLLIQGLGA), serve as a signal peptide directing secretion. 3 disordered regions span residues 29–75 (PDVF…GELF), 93–204 (RPAS…ESPG), and 239–262 (SESA…THLG). The span at 48–64 (AVSRPKDDGVPEVRAAR) shows a compositional bias: basic and acidic residues. Residues 149 to 160 (DPEEDDRSEELE) are compositionally biased toward acidic residues. The span at 182–197 (ETAAAETETRTHTLTR) shows a compositional bias: low complexity. Q313 carries the post-translational modification Pyrrolidone carboxylic acid. A compositionally biased stretch (basic and acidic residues) spans 345–364 (RQRDLGGRELQETQQERENE). The disordered stretch occupies residues 345-599 (RQRDLGGREL…EEADAEERRL (255 aa)). Residues 378 to 397 (EDDVGEEDEEAAEAEAEAEE) are compositionally biased toward acidic residues. A compositionally biased stretch (basic and acidic residues) spans 418-436 (AEDKRSQEEAPGHRRKDAE). S423 carries the phosphoserine modification. Acidic residues predominate over residues 437 to 452 (GAEEGGEEDDDDEEMD). A compositionally biased stretch (pro residues) spans 491-501 (PPEPVPPPRAA). Residues 577–599 (HHPDLEAQARRAQEEADAEERRL) are compositionally biased toward basic and acidic residues.

In terms of assembly, interacts with HSPA8 on cell membrane. Interacts with C3AR1. Interacts with C1QBP.

Its subcellular location is the secreted. The protein localises to the cytoplasmic vesicle. It localises to the secretory vesicle. Secreted polyprotein that is packaged and proteolytically processed by prohormone convertases PCSK1 and PCSK2 in a cell-type-specific manner. VGF and peptides derived from its processing play many roles in neurogenesis and neuroplasticity associated with learning, memory, depression and chronic pain. Functionally, plays a role in the control of body fluid homeostasis by regulating vasopressin release. Suppresses presynaptic glutamatergic neurons connected to vasopressin neurons. In terms of biological role, plays a role in the control of body fluid homeostasis by regulating vasopressin release. Activates GABAergic interneurons which are inhibitory neurons of the nervous system and thereby suppresses presynaptic glutamatergic neurons. Also stimulates feeding behavior in an orexin-dependent manner in the hypothalamus. Functions as a positive regulator for the activation of orexin neurons resulting in elevated gastric acid secretion and gastric emptying. Its function is as follows. Secreted multifunctional peptide that interacts with different receptors and thereby plays multiple physiological roles including modulation of energy expenditure, pain, response to stress, gastric regulation as well as lipolysis. Activates the G-protein-coupled receptor C3AR1 via a folding-upon-binding mechanism leading to enhanced lipolysis in adipocytes. Interacts with gC1qR receptor in macrophages and microglia causing increased levels of intracellular calcium and hypersensitivity. Plays a role in the regulation of memory formation and depression-related behaviors potentially by influencing synaptic plasticity and neurogenesis. Induces acute and transient activation of the NTRK2/TRKB receptor and subsequent CREB phosphorylation. Also induces insulin secretion in insulinoma cells by increasing intracellular calcium mobilization. This Mus musculus (Mouse) protein is Neurosecretory protein VGF.